Reading from the N-terminus, the 346-residue chain is Phosphate acyltransferase (346 aa).

Belongs to the PlsX family. As to quaternary structure, homodimer. Probably interacts with PlsY.

It is found in the cytoplasm. It carries out the reaction a fatty acyl-[ACP] + phosphate = an acyl phosphate + holo-[ACP]. It participates in lipid metabolism; phospholipid metabolism. In terms of biological role, catalyzes the reversible formation of acyl-phosphate (acyl-PO(4)) from acyl-[acyl-carrier-protein] (acyl-ACP). This enzyme utilizes acyl-ACP as fatty acyl donor, but not acyl-CoA. This chain is Phosphate acyltransferase, found in Brucella melitensis biotype 2 (strain ATCC 23457).